Here is a 291-residue protein sequence, read N- to C-terminus: Nucleotide-binding protein CMM_1747 (291 aa).

An ATP-binding site is contributed by 15–22; the sequence is GMSGAGRS. 66–69 serves as a coordination point for GTP; sequence DVRG.

This sequence belongs to the RapZ-like family.

Its function is as follows. Displays ATPase and GTPase activities. This chain is Nucleotide-binding protein CMM_1747, found in Clavibacter michiganensis subsp. michiganensis (strain NCPPB 382).